Reading from the N-terminus, the 875-residue chain is Serine/threonine-protein kinase ATG1 (875 aa).

Residues 22–318 (YSIGPEIGKG…FNEFFNDPLI (297 aa)) form the Protein kinase domain. ATP-binding positions include 28 to 36 (IGKGSFATV) and Lys51. The active-site Proton acceptor is the Asp168. Over residues 367–379 (EKSKQDLPAREVS) the composition is skewed to basic and acidic residues. Disordered regions lie at residues 367–422 (EKSK…QPHN) and 470–515 (INPR…DRRI). The span at 380–389 (THASESQTKA) shows a compositional bias: polar residues. A compositionally biased stretch (basic and acidic residues) spans 390-405 (VDTRPSSRDEEIKEII). Polar residues-rich tracts occupy residues 406–420 (NKNSPGPETSRSIQP), 473–490 (RRTSSGSDNSYNGPNNMQ), and 497–508 (LRSNSSGSQRRP).

Belongs to the protein kinase superfamily. Ser/Thr protein kinase family. APG1/unc-51/ULK1 subfamily. In terms of assembly, homodimer. Forms a ternary complex with ATG13 and ATG17.

The protein resides in the cytoplasm. Its subcellular location is the preautophagosomal structure membrane. The catalysed reaction is L-seryl-[protein] + ATP = O-phospho-L-seryl-[protein] + ADP + H(+). It catalyses the reaction L-threonyl-[protein] + ATP = O-phospho-L-threonyl-[protein] + ADP + H(+). Serine/threonine protein kinase involved in the cytoplasm to vacuole transport (Cvt) and found to be essential in autophagy, where it is required for the formation of autophagosomes. Involved in the clearance of protein aggregates which cannot be efficiently cleared by the proteasome. Required for selective autophagic degradation of the nucleus (nucleophagy) as well as for mitophagy which contributes to regulate mitochondrial quantity and quality by eliminating the mitochondria to a basal level to fulfill cellular energy requirements and preventing excess ROS production. Also involved in endoplasmic reticulum-specific autophagic process, in selective removal of ER-associated degradation (ERAD) substrates. Plays a key role in ATG9 and ATG23 cycling through the pre-autophagosomal structure and is necessary to promote ATG18 binding to ATG9 through phosphorylation of ATG9. Catalyzes phosphorylation of ATG4, decreasing the interaction between ATG4 and ATG8 and impairing deconjugation of PE-conjugated forms of ATG8. The sequence is that of Serine/threonine-protein kinase ATG1 from Debaryomyces hansenii (strain ATCC 36239 / CBS 767 / BCRC 21394 / JCM 1990 / NBRC 0083 / IGC 2968) (Yeast).